Reading from the N-terminus, the 348-residue chain is uncharacterized protein (348 aa).

Residues 1–11 (MTNPQGPPNDP) show a composition bias toward pro residues. Residues 1-83 (MTNPQGPPND…RSGRQAAHQA (83 aa)) are disordered. Helical transmembrane passes span 111–131 (LTVF…LIGG) and 235–255 (IPIL…DGTV).

Its subcellular location is the cell membrane. This is an uncharacterized protein from Mycobacterium tuberculosis (strain CDC 1551 / Oshkosh).